Consider the following 210-residue polypeptide: Leucyl/phenylalanyl-tRNA--protein transferase (210 aa).

Belongs to the L/F-transferase family.

It localises to the cytoplasm. It carries out the reaction N-terminal L-lysyl-[protein] + L-leucyl-tRNA(Leu) = N-terminal L-leucyl-L-lysyl-[protein] + tRNA(Leu) + H(+). The enzyme catalyses N-terminal L-arginyl-[protein] + L-leucyl-tRNA(Leu) = N-terminal L-leucyl-L-arginyl-[protein] + tRNA(Leu) + H(+). It catalyses the reaction L-phenylalanyl-tRNA(Phe) + an N-terminal L-alpha-aminoacyl-[protein] = an N-terminal L-phenylalanyl-L-alpha-aminoacyl-[protein] + tRNA(Phe). In terms of biological role, functions in the N-end rule pathway of protein degradation where it conjugates Leu, Phe and, less efficiently, Met from aminoacyl-tRNAs to the N-termini of proteins containing an N-terminal arginine or lysine. The polypeptide is Leucyl/phenylalanyl-tRNA--protein transferase (Ruegeria sp. (strain TM1040) (Silicibacter sp.)).